The chain runs to 395 residues: MASIEAALAEIKRGVEELIPEEELIAKLKEGRPLRIKLGADPTAPDIHLGHTVIFNKLRLFQELGHEVTFLIGDFTAMVGDPTGKNTTRPPLSREDVLRNAETYKEQVFKILDPAKTKIQFNSEWLSELGAEGMIRLAANQTVARMLERDDFKKRYAGGQPIAIHEFMYPLLQGWDSVAMETDVELGGTDQKFNLLMGRELQKSHGQKPQVVLMMPLLVGLDGEKKMSKSAGNYIGISEAPSEMFGKIMSISDDLMWSYYELLSFRPLEEIEQFKADVQAGKNPRDIKVLLAKEIIARFHSEADADAAEQEFVNRFAKNQIPDEMPEFDFDAGTPVANLLKDAGLCASTSEAMRMVKQGAAKVEGEKVADAKFAPEAGTYVFQVGKRKFARITIK.

Positions proline 42–histidine 51 match the 'HIGH' region motif. The 'KMSKS' region motif lies at lysine 226 to serine 230. Lysine 229 is an ATP binding site. In terms of domain architecture, S4 RNA-binding spans threonine 334 to isoleucine 394.

Belongs to the class-I aminoacyl-tRNA synthetase family. TyrS type 2 subfamily. In terms of assembly, homodimer.

The protein resides in the cytoplasm. It carries out the reaction tRNA(Tyr) + L-tyrosine + ATP = L-tyrosyl-tRNA(Tyr) + AMP + diphosphate + H(+). In terms of biological role, catalyzes the attachment of tyrosine to tRNA(Tyr) in a two-step reaction: tyrosine is first activated by ATP to form Tyr-AMP and then transferred to the acceptor end of tRNA(Tyr). In Vibrio parahaemolyticus serotype O3:K6 (strain RIMD 2210633), this protein is Tyrosine--tRNA ligase 2.